We begin with the raw amino-acid sequence, 157 residues long: 2-C-methyl-D-erythritol 2,4-cyclodiphosphate synthase (157 aa).

A divalent metal cation contacts are provided by aspartate 8 and histidine 10. 4-CDP-2-C-methyl-D-erythritol 2-phosphate-binding positions include 8–10 and 34–35; these read DVH and HS. Histidine 42 contributes to the a divalent metal cation binding site. Residues 56–58, 61–65, 100–106, 132–135, phenylalanine 139, and arginine 142 contribute to the 4-CDP-2-C-methyl-D-erythritol 2-phosphate site; these read DIG, FPDTD, AQAPKMA, and TTTE.

The protein belongs to the IspF family. In terms of assembly, homotrimer. The cofactor is a divalent metal cation.

It catalyses the reaction 4-CDP-2-C-methyl-D-erythritol 2-phosphate = 2-C-methyl-D-erythritol 2,4-cyclic diphosphate + CMP. The protein operates within isoprenoid biosynthesis; isopentenyl diphosphate biosynthesis via DXP pathway; isopentenyl diphosphate from 1-deoxy-D-xylulose 5-phosphate: step 4/6. Its function is as follows. Involved in the biosynthesis of isopentenyl diphosphate (IPP) and dimethylallyl diphosphate (DMAPP), two major building blocks of isoprenoid compounds. Catalyzes the conversion of 4-diphosphocytidyl-2-C-methyl-D-erythritol 2-phosphate (CDP-ME2P) to 2-C-methyl-D-erythritol 2,4-cyclodiphosphate (ME-CPP) with a corresponding release of cytidine 5-monophosphate (CMP). This chain is 2-C-methyl-D-erythritol 2,4-cyclodiphosphate synthase, found in Ectopseudomonas mendocina (strain ymp) (Pseudomonas mendocina).